The following is a 1049-amino-acid chain: MRSFYNKCFTNKLISAHSLFCQHVSTLKNNKKECFEDVKRSNRISDEFYSSFLYHSYIENLKSTKEYVYFIYLQDIYYNINIFKNKGRLYISNNGLCNDKLKDNNNNNNINSNNFGNSYNAYTKKKSFYHSFNDLNEAKEIRKKRKNEKSEKNIVEYLLCNIINPNENYHIQNIYNHNLNNNVSIEIHKKNDSVMYHYNNEKKTKTSKMTTDIKLKQINNVYIKYVPYKNKIITLACPNKYYPTLYRYFSSHTNKKEDAEENDKNKNININNVDNRYKEDFMYGCENKNDSEKHKKTTNNNFGDEFEKLKVKELDKILNKLEMLYDNKNNKMNINVKILGYIFKNFLLKNKELKRKIFCSLFFLLCSKMAIIYTPILLSTFIENVNLQKSLSNNIDIYSTNKSSVLLLCAYVFSRVLSSTMNELRNSVFSNISQKISTFVSKLFFYKIHNLNLTYILSKKNGELSFIFNRGCKSITNLLNVMVFQIIPIIIEFILYLYILTYKIHYTVSLVTCFNMFLYVLFTTLITKRRTIIRKHMNKAEQNTFNIFLDSIQNVEQVKYYTNEIHELKKFIKEQKKYEKEAINVQKSLSFLNFGQQIILNTNLFLCMYLTYLNIANDIFPFSYLILVNTLLFQLAMPLNMFGTIYRETKLSLVDIESMIKILVKKIKSPDYGNQMLIKNGNIKFENVYFKYPLNEDINGLEQNYQAKEKDPNIINNINNINNINNINNINNINSINNIYTFESNVKNISSTNMITSSINKLKKWYLDKVKDNKKNVQYNNNDVKKTNPNITKNLNKEIKENINTHLKNHKIINNSPNYNNNNYLFQNFTCNIENGEKVAIIGKSGSGKSSLIKLLLKFYEVNSGNIYIDNKNIDDIDLYTLRKNISVVPQDTILFNNTISYNIKYGNFQCTDKQMIQASIKAELHDKIMKMENKYDTIVGERGTKLSIGEKQRICIARCFLKDSKIIVLDEHASNLDNENKKAIEKALTKLCMGKTTFIITHVMENLKHMDKIIFFCGKNIYVGSHKNLMDDNHFYREYYDSKNNKML.

A mitochondrion-targeting transit peptide spans 1-90 (MRSFYNKCFT…NIFKNKGRLY (90 aa)). A run of 6 helical transmembrane segments spans residues 357 to 377 (IFCS…TPIL), 397 to 419 (IYST…VLSS), 481 to 501 (VMVF…YILT), 506 to 526 (YTVS…TTLI), 591 to 611 (FLNF…MYLT), and 619 to 639 (IFPF…AMPL). The ABC transmembrane type-1 domain maps to 360-651 (SLFFLLCSKM…FGTIYRETKL (292 aa)). In terms of domain architecture, ABC transporter spans 807 to 1043 (LKNHKIINNS…NHFYREYYDS (237 aa)). 843–850 (GKSGSGKS) contacts ATP.

This sequence belongs to the ABC transporter superfamily. ABCB family. Heavy Metal importer (TC 3.A.1.210) subfamily. As to quaternary structure, homodimer. Interacts with ISCU. Interacts with IscA2. Interacts with NBP35. Interacts with mHCF101.

It is found in the mitochondrion membrane. ATPase activity is stimulated by reduced glutathione. Functionally, transports glutathione-coordinated [4Fe-4S] iron-sulfur clusters in an ATP-dependent manner. Required for optimal parasite growth during erythrocytic stages. The polypeptide is ABC transporter ATM1 (Plasmodium falciparum (isolate 3D7)).